We begin with the raw amino-acid sequence, 119 residues long: Bombesin (119 aa).

Residues 1–29 (MSAIPLNRILPLGFLFHLLIFSFISLSSC) form the signal peptide. Positions 30–44 (MEFVEDPNNQGRISL) are excised as a propeptide. Methionine amide is present on methionine 58. A propeptide spanning residues 62-119 (SLQDTDFEEMESFAKRNVENMRAALLQEQNRAESERELRHAQLVVRNILEQYLKNMQN) is cleaved from the precursor.

The protein belongs to the bombesin/neuromedin-B/ranatensin family. As to expression, localized to the cutaneous granular glands in the skin and the brain.

Its subcellular location is the secreted. Functionally, stimulates smooth muscle contraction. Role in induction of hypothermia, stimulation of DNA replication and release of many gastrointestinal hormones. This Bombina orientalis (Oriental fire-bellied toad) protein is Bombesin.